We begin with the raw amino-acid sequence, 260 residues long: Circadian clock-controlled protein daywake (260 aa).

A signal peptide spans 1–25 (MQLTSASVCLLWMGLLSWVSHRIDA).

Belongs to the TO family.

Its function is as follows. Component of the circadian clock or downstream effector of clock function. Required for suppressing daytime sleep (siesta) under ambient environmental temperatures. Part of a heat avoidance mechanism that modulates daytime sleep behavior under different environmental temperatures to minimize the risk of heat exposure. Under cooler ambient temperatures, suppresses daytime sleep (siesta) and thus allows for longer periods of daytime activity. In Drosophila yakuba (Fruit fly), this protein is Circadian clock-controlled protein daywake.